Consider the following 379-residue polypeptide: D-threonine aldolase (379 aa).

At Lys-59 the chain carries N6-(pyridoxal phosphate)lysine.

It belongs to the DSD1 family. Pyridoxal 5'-phosphate is required as a cofactor. The cofactor is Mn(2+). Co(2+) serves as cofactor. Requires Ni(2+) as cofactor. It depends on Mg(2+) as a cofactor.

The enzyme catalyses D-threonine = acetaldehyde + glycine. The catalysed reaction is D-allo-threonine = acetaldehyde + glycine. Inhibited by the carbonyl reagents hydroxylamine, phenylhydrazine and semicarbazide. Inhibited by the chelating agent EDTA. Inhibited by the sulfhydryl reagent p-chloromercuribenzoic acid, and by sodium cyanide. Inhibited by iodoacetate, Ag(2)SO(4), HgCl(2) and CdCl(2). Competitively inhibited by beta-hydroxyaspartate and O-phospho-DL-threonine. Its function is as follows. Catalyzes the reversible cleavage of D-threonine or D-allothreonine into glycine and acetaldehyde. Can also cleave D-beta-phenylserine, D-beta-hydroxy-alpha-aminovaleric acid, D-beta-3,4-dihydroxyphenylserine and D-beta-3,4-methylenedioxyphenylserine into glycine and the corresponding aldehyde compounds. Inactive towards D-serine, beta-hydroxyaspartate and O-phospho-DL-threonine. This chain is D-threonine aldolase, found in Arthrobacter sp.